Consider the following 469-residue polypeptide: MPTISEDLIRRRAEHNNCEIFSLEEISLHQQDLERIEHIDKWCRELKILYLQNNLIGKIENVSKLKKLEYLNLALNNIEKIENLEGCESLQKLDLTVNFVGELSSINSLQENLHLRELYLVGNPCAEYEGYRQYVVATLPQLKWLDGKEIERSERIQALQDYPQVQGRMKEQQEAYLRKRAAEREEARSKLQGKQKESRKTQEKKPGFDRRWYTDINNTIPDPVEKPDPTEQNGDETALRKAEEEEEKEFWSQPSQYTPESRLETHRYLEEKRKSKESSSEGELKKKPPRTLITAEGRVLNVNESKLDFSLVDDEENNQFVLDLAIYRHLDTSLVDVDVQPSYIKVLVKEKPFQLVLPAEVKPDSSSAKRSQTTGHLVVTMPKAIGVIQTKRAKSPVVEEQTRKNPPKCSKTFEKLEVDPKACSVPDFANIVQEKKTQAQGPLQFHKNKVKDTEDSEDFIDNTDVPPLM.

LRR repeat units lie at residues 20–43, 44–65, 66–89, and 90–110; these read IFSLEEISLHQQDLERIEHIDKWC, RELKILYLQNNLIGKIENVSKL, KKLEYLNLALNNIEKIENLEGCES, and LQKLDLTVNFVGELSSINSLQ. Positions 114-135 constitute an LRRCT domain; it reads HLRELYLVGNPCAEYEGYRQYV. Composition is skewed to basic and acidic residues over residues 179-213 and 261-286; these read KRAAEREEARSKLQGKQKESRKTQEKKPGFDRRWY and SRLETHRYLEEKRKSKESSSEGELKK. Disordered stretches follow at residues 179–290 and 436–469; these read KRAA…KPPR and KTQAQGPLQFHKNKVKDTEDSEDFIDNTDVPPLM.

Belongs to the tilB family.

The protein resides in the cytoplasm. Its subcellular location is the cell projection. The protein localises to the cilium. It is found in the dynein axonemal particle. It localises to the flagellum. Functionally, involved in dynein arm assembly, is important for expression and transporting outer dynein arm (ODA) proteins from the cytoplasm to the cilia. The protein is Dynein axonemal assembly factor 11 (dnaaf11) of Xenopus laevis (African clawed frog).